The sequence spans 473 residues: ATP-dependent 6-phosphofructokinase 1 (473 aa).

Residue Ser-71 is modified to Phosphoserine. ATP is bound by residues Gly-102, 165 to 166 (RG), and 190 to 193 (GDGS). Asp-191 contacts Mg(2+). Substrate is bound by residues 219 to 221 (TID), 264 to 266 (MGR), Glu-320, and 376 to 379 (YMIR). Asp-221 (proton acceptor) is an active-site residue.

The protein belongs to the phosphofructokinase type A (PFKA) family. PPi-dependent PFK group II subfamily. Atypical ATP-dependent clade 'X' sub-subfamily. In terms of assembly, homotetramer. The cofactor is Mg(2+). Expressed in roots, leaves, stems and flowers.

Its subcellular location is the cytoplasm. It carries out the reaction beta-D-fructose 6-phosphate + ATP = beta-D-fructose 1,6-bisphosphate + ADP + H(+). It functions in the pathway carbohydrate degradation; glycolysis; D-glyceraldehyde 3-phosphate and glycerone phosphate from D-glucose: step 3/4. Allosterically activated by AMP. In terms of biological role, catalyzes the phosphorylation of D-fructose 6-phosphate to fructose 1,6-bisphosphate by ATP, the first committing step of glycolysis. In Arabidopsis thaliana (Mouse-ear cress), this protein is ATP-dependent 6-phosphofructokinase 1.